Consider the following 297-residue polypeptide: HTH-type transcriptional regulator ArgP (297 aa).

The HTH lysR-type domain maps to 2-58 (FDYKLLSALAAVVEQAGFERAAQVLGLSQSAISQRIKLLEARVGQPVLVRGTPPSPT). A DNA-binding region (H-T-H motif) is located at residues 19–38 (FERAAQVLGLSQSAISQRIK).

This sequence belongs to the LysR transcriptional regulatory family. In terms of assembly, homodimer.

Controls the transcription of genes involved in arginine and lysine metabolism. In Pseudomonas fluorescens (strain Pf0-1), this protein is HTH-type transcriptional regulator ArgP.